A 515-amino-acid polypeptide reads, in one-letter code: Protein DETOXIFICATION 42 (515 aa).

At 1–35 (MMSEDGYNTDFPRNPLYIFFSDFRSVLKFDELGLE) the chain is on the cytoplasmic side. A helical transmembrane segment spans residues 36–56 (IARIALPAALALTADPIASLV). Residues 57–58 (DT) are Extracellular-facing. The chain crosses the membrane as a helical span at residues 59-79 (AFIGQIGPVELAAVGVSIALF). The Cytoplasmic portion of the chain corresponds to 80 to 168 (NQVSRIAIFP…AKKRNIPSAS (89 aa)). Residues 169–189 (SALIIGGVLGLFQAVFLISAA) form a helical membrane-spanning segment. Residues 190–211 (KPLLSFMGVKHDSPMMRPSQRY) lie on the Extracellular side of the membrane. The chain crosses the membrane as a helical span at residues 212–232 (LSLRSLGAPAVLLSLAAQGVF). Residues 233-242 (RGFKDTTTPL) lie on the Cytoplasmic side of the membrane. Residues 243-263 (FATVIGDVTNIILDPIFIFVF) form a helical membrane-spanning segment. Residues 264–266 (RLG) are Extracellular-facing. The helical transmembrane segment at 267 to 287 (VTGAATAHVISQYLMCGILLW) threads the bilayer. Residues 288–312 (KLMGQVDIFNMSTKHLQFCRFMKNG) are Cytoplasmic-facing. The chain crosses the membrane as a helical span at residues 313-333 (FLLLMRVIAVTFCVTLSASLA). The Extracellular portion of the chain corresponds to 334–349 (AREGSTSMAAFQVCLQ). The helical transmembrane segment at 350–370 (VWLATSLLADGYAVAGQAILA) threads the bilayer. The Cytoplasmic segment spans residues 371–390 (SAFAKKDYKRAAATASRVLQ). Residues 391–411 (LGLVLGFVLAVILGAGLHFGA) traverse the membrane as a helical segment. Residues 412–423 (RVFTKDDKVLHL) are Extracellular-facing. The chain crosses the membrane as a helical span at residues 424 to 444 (ISIGLPFVAGTQPINALAFVF). Residues 445–453 (DGVNFGASD) are Cytoplasmic-facing. A helical transmembrane segment spans residues 454–474 (FGYAAASLVMVAIVSILCLLF). Topologically, residues 475 to 480 (LSSTHG) are extracellular. The chain crosses the membrane as a helical span at residues 481-501 (FIGLWFGLTIYMSLRAAVGFW). The Cytoplasmic portion of the chain corresponds to 502 to 515 (RIGTGTGPWSFLRS).

This sequence belongs to the multi antimicrobial extrusion (MATE) (TC 2.A.66.1) family. Expressed in roots, but not in shoots. Detected in the mature regions of the root, extending from above the root-hair region to the root-shoot junction.

The protein resides in the cell membrane. In terms of biological role, citrate transporter critical for aluminum tolerance. Responsible for citrate exudation into the rhizosphere to protect roots from aluminum toxicity. The sequence is that of Protein DETOXIFICATION 42 from Arabidopsis thaliana (Mouse-ear cress).